The primary structure comprises 103 residues: Small ribosomal subunit protein uS10 (103 aa).

Belongs to the universal ribosomal protein uS10 family. In terms of assembly, part of the 30S ribosomal subunit.

Its function is as follows. Involved in the binding of tRNA to the ribosomes. This chain is Small ribosomal subunit protein uS10, found in Hahella chejuensis (strain KCTC 2396).